The sequence spans 307 residues: Protoheme IX farnesyltransferase (307 aa).

8 helical membrane passes run 32 to 52 (MGIV…ALHF), 65 to 85 (FFTI…NNYI), 108 to 128 (PGFA…FLLL), 131 to 151 (PMAV…YSLW), 158 to 178 (LNTV…WAAI), 186 to 206 (IAWM…LALA), 251 to 271 (LGIT…VLGF), and 287 to 307 (FVYS…VTFF).

It belongs to the UbiA prenyltransferase family. Protoheme IX farnesyltransferase subfamily. As to quaternary structure, interacts with CtaA.

The protein localises to the cell membrane. It catalyses the reaction heme b + (2E,6E)-farnesyl diphosphate + H2O = Fe(II)-heme o + diphosphate. The protein operates within porphyrin-containing compound metabolism; heme O biosynthesis; heme O from protoheme: step 1/1. Its function is as follows. Converts heme B (protoheme IX) to heme O by substitution of the vinyl group on carbon 2 of heme B porphyrin ring with a hydroxyethyl farnesyl side group. In Bacillus cereus (strain G9842), this protein is Protoheme IX farnesyltransferase.